A 623-amino-acid polypeptide reads, in one-letter code: MGIKGLTKFIADAAPNAIKEIKIENLMGRVVAIDASMSLYQFIIAIRDSEQYGNLTNESGETTSHISGLMSRSIKLMENGLKPIYVFDGAPPELKGSELEKRGEKRQKAEELLKKAKEEGNLEEIKKQSGRTVRVTRKQNEEAKKLLTLMGIPVVEAPCEAESQCAFLTKYNLAHATATEDADALVFGTKILIRNLNANASSANQNKNKNSSKRGYILTEINLEQVLKGLNLSMNEFIDFCILCGCDYCDTIKGIGSKTAYNLIKEYNSIEKIIENIDKNKYQVPSNFRFVEARDSFINPKVLPKEEVKIDWCEPKIEELKNFLIKDYNFNEVRVTNYINRLLKARKVTTQRRLDNFFTACTKKSTKLVIEESQSQSKTQKEAKSKRKGKKRDAPNDGAAKLNSKQSKKTKVEKEPKREKKDEEAPNGEAHNGDNNEDEETPGMGARDPFDTDDEEDNPSPNFFHQKSDSESGNVKKEKTEQEGNATTAGDVYNYPNGKDTAGSNTHLSSNSTLHSCNNVGSEKAPNEGMHTVGSSAPEAGTNHVGINHVGTNHVGINHVGTNHVGTNHVGSGDLFPPNVADCANNNADKAQPEMKKKNMLFLLPYCPKNVTNVKKRKSVQRC.

The interval 1–106 (MGIKGLTKFI…SELEKRGEKR (106 aa)) is N-domain. D34 serves as a coordination point for Mg(2+). 2 residues coordinate DNA: R47 and R72. Residues D88, E160, E162, D181, and D183 each contribute to the Mg(2+) site. The tract at residues 124–267 (EIKKQSGRTV…KTAYNLIKEY (144 aa)) is I-domain. E160 is a DNA binding site. DNA is bound by residues G245 and D247. D247 serves as a coordination point for Mg(2+). The interval 350–358 (TQRRLDNFF) is interaction with PCNA. Residues 368 to 517 (LVIEESQSQS…LSSNSTLHSC (150 aa)) form a disordered region. Basic and acidic residues-rich tracts occupy residues 410-424 (TKVE…KDEE) and 466-482 (QKSD…KTEQ). A compositionally biased stretch (polar residues) spans 502–517 (AGSNTHLSSNSTLHSC).

The protein belongs to the XPG/RAD2 endonuclease family. FEN1 subfamily. Interacts with PCNA. Three molecules of FEN1 bind to one PCNA trimer with each molecule binding to one PCNA monomer. PCNA stimulates the nuclease activity without altering cleavage specificity. Mg(2+) is required as a cofactor. Phosphorylated. Phosphorylation upon DNA damage induces relocalization to the nuclear plasma.

The protein localises to the nucleus. It localises to the nucleolus. Its subcellular location is the nucleoplasm. The protein resides in the mitochondrion. Structure-specific nuclease with 5'-flap endonuclease and 5'-3' exonuclease activities involved in DNA replication and repair. During DNA replication, cleaves the 5'-overhanging flap structure that is generated by displacement synthesis when DNA polymerase encounters the 5'-end of a downstream Okazaki fragment. It enters the flap from the 5'-end and then tracks to cleave the flap base, leaving a nick for ligation. Also involved in the long patch base excision repair (LP-BER) pathway, by cleaving within the apurinic/apyrimidinic (AP) site-terminated flap. Acts as a genome stabilization factor that prevents flaps from equilibrating into structures that lead to duplications and deletions. Also possesses 5'-3' exonuclease activity on nicked or gapped double-stranded DNA, and exhibits RNase H activity. Also involved in replication and repair of rDNA and in repairing mitochondrial DNA. The protein is Flap endonuclease 1 of Plasmodium vivax (strain Salvador I).